Consider the following 464-residue polypeptide: NADH dehydrogenase [ubiquinone] flavoprotein 1, mitochondrial (464 aa).

The N-terminal 20 residues, 1-20 (MLAARRLLGGSLPSRVSVRF), are a transit peptide targeting the mitochondrion. Lys-81 carries the post-translational modification N6-acetyllysine; alternate. The residue at position 81 (Lys-81) is an N6-succinyllysine; alternate. 87-96 (GRGGAGFPTG) contacts NADH. An N6-acetyllysine modification is found at Lys-104. 199–247 (RGAGAYICGEETALIESIEGKQGKPRLKPPFPADVGVFGCPTTVANVET) is an FMN binding site. The residue at position 257 (Arg-257) is an Omega-N-methylarginine. Residue Lys-375 is modified to N6-acetyllysine. Cys-379, Cys-382, Cys-385, and Cys-425 together coordinate [4Fe-4S] cluster.

The protein belongs to the complex I 51 kDa subunit family. As to quaternary structure, core subunit of respiratory chain NADH dehydrogenase (Complex I) which is composed of 45 different subunits. This is a component of the flavoprotein-sulfur (FP) fragment of the enzyme. Interacts with RAB5IF. It depends on FMN as a cofactor. The cofactor is [4Fe-4S] cluster.

The protein resides in the mitochondrion inner membrane. The enzyme catalyses a ubiquinone + NADH + 5 H(+)(in) = a ubiquinol + NAD(+) + 4 H(+)(out). Functionally, core subunit of the mitochondrial membrane respiratory chain NADH dehydrogenase (Complex I) which catalyzes electron transfer from NADH through the respiratory chain, using ubiquinone as an electron acceptor. Part of the peripheral arm of the enzyme, where the electrons from NADH are accepted by flavin mononucleotide (FMN) and then passed along a chain of iron-sulfur clusters by electron tunnelling to the final acceptor ubiquinone. Contains FMN, which is the initial electron acceptor as well as one iron-sulfur cluster. The sequence is that of NADH dehydrogenase [ubiquinone] flavoprotein 1, mitochondrial from Macaca fascicularis (Crab-eating macaque).